The chain runs to 261 residues: Acetylglutamate kinase (261 aa).

Residues 45-46 (GG), R67, and N162 contribute to the substrate site.

It belongs to the acetylglutamate kinase family. ArgB subfamily.

It is found in the cytoplasm. It catalyses the reaction N-acetyl-L-glutamate + ATP = N-acetyl-L-glutamyl 5-phosphate + ADP. The protein operates within amino-acid biosynthesis; L-arginine biosynthesis; N(2)-acetyl-L-ornithine from L-glutamate: step 2/4. Its function is as follows. Catalyzes the ATP-dependent phosphorylation of N-acetyl-L-glutamate. This is Acetylglutamate kinase from Bacteroides fragilis (strain ATCC 25285 / DSM 2151 / CCUG 4856 / JCM 11019 / LMG 10263 / NCTC 9343 / Onslow / VPI 2553 / EN-2).